Reading from the N-terminus, the 597-residue chain is NADH-quinone oxidoreductase subunit C/D (597 aa).

The NADH dehydrogenase I subunit C stretch occupies residues 1–188 (MKKEIKRDDV…DPYVLNKYKE (188 aa)). The segment at 211 to 597 (KYMFLNLGPN…IDFVMSDVDR (387 aa)) is NADH dehydrogenase I subunit D.

This sequence in the N-terminal section; belongs to the complex I 30 kDa subunit family. In the C-terminal section; belongs to the complex I 49 kDa subunit family. As to quaternary structure, NDH-1 is composed of 13 different subunits. Subunits NuoB, CD, E, F, and G constitute the peripheral sector of the complex.

It is found in the cell inner membrane. The catalysed reaction is a quinone + NADH + 5 H(+)(in) = a quinol + NAD(+) + 4 H(+)(out). NDH-1 shuttles electrons from NADH, via FMN and iron-sulfur (Fe-S) centers, to quinones in the respiratory chain. The immediate electron acceptor for the enzyme in this species is believed to be ubiquinone. Couples the redox reaction to proton translocation (for every two electrons transferred, four hydrogen ions are translocated across the cytoplasmic membrane), and thus conserves the redox energy in a proton gradient. The polypeptide is NADH-quinone oxidoreductase subunit C/D (Buchnera aphidicola subsp. Baizongia pistaciae (strain Bp)).